A 346-amino-acid polypeptide reads, in one-letter code: Olfactory receptor 13D1 (346 aa).

Over 1–57 the chain is Extracellular; the sequence is MYRFTDFDVSNISIYLNHVLFYTTQQAGDLEHMETRNYSAMTEFFLVGLSQYPELQL. N37 carries an N-linked (GlcNAc...) asparagine glycan. A helical transmembrane segment spans residues 58–78; sequence FLFLLCLIMYMIILLGNSLLI. Residues 79–86 are Cytoplasmic-facing; that stretch reads IITILDSR. A helical membrane pass occupies residues 87 to 107; it reads LHTPMYFFLGNLSFLDICYTS. At 108-131 the chain is on the extracellular side; it reads SSIPPMLIIFMSERKSISFIGCAL. C129 and C221 are oxidised to a cystine. A helical membrane pass occupies residues 132-152; the sequence is QMVVSLGLGSTECVLLAVMAY. Residues 153-171 lie on the Cytoplasmic side of the membrane; the sequence is DHYVAICNPLRYSIIMNGV. The helical transmembrane segment at 172-192 threads the bilayer; that stretch reads LYVQMAAWSWIIGCLTSLLQT. Topologically, residues 193 to 229 are extracellular; that stretch reads VLTMMLPFCGNNVIDHITCEILALLKLVCSDITINVL. A helical transmembrane segment spans residues 230–249; the sequence is IMTVTNIVSLVILLLLIFIS. Residues 250–269 lie on the Cytoplasmic side of the membrane; that stretch reads YVFILSSILRINCAEGRKKA. A helical membrane pass occupies residues 270–290; it reads FSTCSAHSIVVILFYGSALFM. Residues 291 to 303 are Extracellular-facing; it reads YMKPKSKNTNTSD. A glycan (N-linked (GlcNAc...) asparagine) is linked at N300. Residues 304 to 324 traverse the membrane as a helical segment; sequence EIIGLSYGVVSPMLNPIIYSL. At 325–346 the chain is on the cytoplasmic side; that stretch reads RNKEVKEAVKKVLSRHLHLLKM.

This sequence belongs to the G-protein coupled receptor 1 family.

Its subcellular location is the cell membrane. Functionally, odorant receptor. This Homo sapiens (Human) protein is Olfactory receptor 13D1 (OR13D1).